Reading from the N-terminus, the 907-residue chain is Putative pentatricopeptide repeat-containing protein At5g59900 (907 aa).

PPR repeat units lie at residues 103 to 137 (STAS…ALKP), 155 to 185 (SSSS…MITK), 191 to 225 (EVRT…GIRP), 226 to 260 (DVYI…GCDV), 261 to 295 (NIVP…DLKP), 296 to 330 (DVVT…RFSP), 331 to 365 (SEAA…GVSP), 366 to 400 (NLFV…GLRP), 401 to 435 (NDVT…GLKL), 436 to 470 (SVYP…KLEP), 471 to 505 (TVVT…GIAP), 506 to 540 (SIYT…NVKP), 541 to 575 (NRVT…GIVP), 576 to 610 (DTYS…NCEL), 611 to 645 (NEIC…GVDL), 646 to 680 (DLVC…GLKP), 681 to 715 (DDVI…GCVP), 716 to 750 (NEVT…SSVP), 751 to 782 (NQVT…ILKG), 786 to 820 (NTAT…GVSP), 821 to 855 (DCIT…GIRP), and 856 to 890 (DRVA…GLIP). The disordered stretch occupies residues 887 to 907 (GLIPNNKTSRTTTSNDTSSKS). Residues 891–907 (NNKTSRTTTSNDTSSKS) are compositionally biased toward low complexity.

Belongs to the PPR family. P subfamily.

The protein is Putative pentatricopeptide repeat-containing protein At5g59900 of Arabidopsis thaliana (Mouse-ear cress).